A 678-amino-acid chain; its full sequence is Protein distal antenna (678 aa).

Residues 7-58 form the HTH psq-type domain; the sequence is TKGKRPLRSLTPRDKIHAIQRIHDGESKASVARDIGVPESTLRGWCKNEDKL. The H-T-H motif DNA-binding region spans 34–54; sequence KASVARDIGVPESTLRGWCKN. 5 disordered regions span residues 232–310, 344–381, 445–528, 541–592, and 645–678; these read GAGN…GGPM, GVTSPPIRSSTPQHMSQLAQTPPIPSAPLTPSSTPSGS, KETE…TSEC, GMEA…DEEE, and NETPMIEKSALPEDSEEHAAEEEGSGRGKSRRRK. Polar residues-rich tracts occupy residues 241–254 and 349–363; these read PSGQTPLQVQSPRS and PIRSSTPQHMSQLAQ. Residues serine 251 and serine 254 each carry the phosphoserine modification. Residues 372 to 381 are compositionally biased toward low complexity; sequence LTPSSTPSGS. Residues 449–461 are compositionally biased toward polar residues; the sequence is TPSVRSLSSNEQN. Acidic residues predominate over residues 462-478; sequence PEADEATETDLDGEVEP. The segment covering 495 to 508 has biased composition (polar residues); that stretch reads TPSQSPIAHSSGSR. A compositionally biased stretch (low complexity) spans 570–586; it reads NNNDVSASNNNNNNNSN. Positions 657 to 667 are enriched in acidic residues; the sequence is EDSEEHAAEEE.

As to quaternary structure, homomers. Interacts with itself, danr, ey and dac to form a complex (or complexes) containing the RD factors. As to expression, coexpressed with danr in the presumptive distal antenna, but not in the leg imaginal disk. Both proteins are also expressed in the brain and the eye region of the eye-antenna disk. First detected in early L3 eye disks in cells surrounding the newly initiated MF. Levels are uniform and high anterior to the furrow, lower levels within and posterior to the furrow. Limited expression is seen in small groups of cells in leg and wing. These appear in the location of prominent sense organ progenitors at relatively late stages of disk development.

Its subcellular location is the nucleus. Its function is as follows. Probable transcription factor with a role in the retinal determination (RD) network. Regulates ato expression and is required for normal R8 induction and differentiation. Danr appears to repress Dan expression, but Dan is required for Danr expression anterior to the morphogenetic furrow (MF). Dan and Danr lie downstream of so and require dac function for highest levels of expression. Contributes to differentiation of antenna-specific characteristics; effector gene that acts downstream of homothorax (hth), Distal-less (Dll), cut (ct) and spineless (ss) genes to control differentiation of distal antennal structures. The polypeptide is Protein distal antenna (Drosophila melanogaster (Fruit fly)).